The primary structure comprises 613 residues: MMDGYAQEWPRLTHTDNGLAMDQLGGDLPLDVGFEPQTRARSNTWPCPRPENFVEPTDELDSTKASNQQLAPGDSQQAIQNANAAKKNSSRRNAWGNLSYADLITHAIGSATDKRLTLSQIYEWMVQNVPYFKDKGDSNSSAGWKNSIRHNLSLHNRFMRVQNEGTGKSSWWMLNPEAKPGKSVRRRAASMETSRYEKRRGRAKKRVEALRQAGVVGLNDATPSPSSSVSEGLDHFPESPLHSGGGFQLSPDFRQRASSNASSCGRLSPIRAQDLEPDWGFPVDYQNTTMTQAHAQALEELTGTMADELTLCNQQQQGFSAASGLPSQPPPPPYQPPQHQQAQQQQQQQSPYALNGPASGYNTLQPQSQCLLHRSLNCSCMHNARDGLSPNSVTTTMSPAYPNSEPSSDSLNTYSNVVLDGPADTAALMVQQQQQQQQQQQLSASLEGQCLEVLNNEAQPIDEFNLENFPVGNLECNVEELLQQEMSYGGLLDINIPLATVNTNLVNSSSGPLSISNISNLSNISSNSGSSLSLNQLQAQLQQQQQQQQAQQQQQAQQQQQQHQQHQQQLLLNNNNNSSSSLELATQTATTNLNARVQYSQPSVVTSPPSWVH.

Disordered regions lie at residues 39–90 (RARS…KNSS), 182–205 (KSVR…RAKK), 217–269 (GLND…RLSP), and 317–360 (QGFS…PASG). T44 bears the Phosphothreonine; by PKB/AKT1 mark. Polar residues predominate over residues 63–80 (TKASNQQLAPGDSQQAIQ). Position 75 is a phosphoserine (S75). The span at 81 to 90 (NANAAKKNSS) shows a compositional bias: low complexity. A DNA-binding region (fork-head) is located at residues 95–201 (WGNLSYADLI…ETSRYEKRRG (107 aa)). At S190 the chain carries Phosphoserine; by PKB/AKT1. Polar residues-rich tracts occupy residues 221–230 (ATPSPSSSVS) and 256–265 (RASSNASSCG). Phosphoserine; by PKB/AKT1 is present on S259. Phosphoserine is present on residues S262, S263, and S268. Residues 327-336 (SQPPPPPYQP) show a composition bias toward pro residues. Over residues 337–353 (PQHQQAQQQQQQQSPYA) the composition is skewed to low complexity.

In terms of assembly, interacts with melt.

It localises to the cytoplasm. It is found in the nucleus. Its function is as follows. Transcription factor involved in the regulation of the insulin signaling pathway. Consistently activates both the downstream target Thor\d4EBP and the feedback control target InR. Involved in negative regulation of the cell cycle, modulating cell growth and proliferation. In response to cellular stresses, such as nutrient deprivation or increased levels of reactive oxygen species, foxo is activated and inhibits growth through the action of target genes such as Thor. Foxo activated in the adult fat body can regulate lifespan in adults; an insulin peptide itself may function as one secondary messenger of insulin-regulated aging. Also regulates Lip4, homolog of human acid lipases, thereby acting as a key modulator of lipid metabolism by insulin signaling and integrates insulin responses to glucose and lipid homeostasis. The chain is Forkhead box protein O from Drosophila melanogaster (Fruit fly).